The sequence spans 257 residues: Cytochrome c oxidase subunit 3 (257 aa).

6 helical membrane-spanning segments follow: residues 15–35, 82–102, 124–144, 156–176, 194–214, and 235–255; these read PWPL…VKWF, GMIL…WGFF, FLSA…VTWA, CLQG…LQGL, FFLA…FLMI, and AWYW…IYWW.

Belongs to the cytochrome c oxidase subunit 3 family. As to quaternary structure, component of the cytochrome c oxidase (complex IV, CIV), a multisubunit enzyme composed of a catalytic core of 3 subunits and several supernumerary subunits. The complex exists as a monomer or a dimer and forms supercomplexes (SCs) in the inner mitochondrial membrane with ubiquinol-cytochrome c oxidoreductase (cytochrome b-c1 complex, complex III, CIII).

The protein resides in the mitochondrion inner membrane. The catalysed reaction is 4 Fe(II)-[cytochrome c] + O2 + 8 H(+)(in) = 4 Fe(III)-[cytochrome c] + 2 H2O + 4 H(+)(out). Functionally, component of the cytochrome c oxidase, the last enzyme in the mitochondrial electron transport chain which drives oxidative phosphorylation. The respiratory chain contains 3 multisubunit complexes succinate dehydrogenase (complex II, CII), ubiquinol-cytochrome c oxidoreductase (cytochrome b-c1 complex, complex III, CIII) and cytochrome c oxidase (complex IV, CIV), that cooperate to transfer electrons derived from NADH and succinate to molecular oxygen, creating an electrochemical gradient over the inner membrane that drives transmembrane transport and the ATP synthase. Cytochrome c oxidase is the component of the respiratory chain that catalyzes the reduction of oxygen to water. Electrons originating from reduced cytochrome c in the intermembrane space (IMS) are transferred via the dinuclear copper A center (CU(A)) of subunit 2 and heme A of subunit 1 to the active site in subunit 1, a binuclear center (BNC) formed by heme A3 and copper B (CU(B)). The BNC reduces molecular oxygen to 2 water molecules using 4 electrons from cytochrome c in the IMS and 4 protons from the mitochondrial matrix. This chain is Cytochrome c oxidase subunit 3 (COIII), found in Artemia franciscana (Brine shrimp).